A 415-amino-acid polypeptide reads, in one-letter code: Leucine-rich repeat-containing protein 34 (415 aa).

2 LRR repeats span residues T246–N272 and T274–T296.

Interacts with NPM1 and NCL.

It localises to the nucleus. The protein resides in the nucleolus. It is found in the cytoplasm. In terms of biological role, highly expressed in stem cells where it may be involved in regulation of pluripotency. In embryonic stem cells (ESCs), important for normal expression of the pluripotency regulators POU5F1/OCT4 and KLF4. Also important for expression of the ectodermal marker gene NES and the endodermal marker gene GATA4. Promotes stem cell proliferation in vitro. The sequence is that of Leucine-rich repeat-containing protein 34 (Lrrc34) from Rattus norvegicus (Rat).